A 233-amino-acid chain; its full sequence is Phosphonates import ATP-binding protein PhnC 1 (233 aa).

Positions 2–227 (LSVSGLTKRY…PAAALDREDI (226 aa)) constitute an ABC transporter domain. 34-41 (GRSGAGKT) lines the ATP pocket.

It belongs to the ABC transporter superfamily. Phosphonates importer (TC 3.A.1.9.1) family. In terms of assembly, the complex is composed of two ATP-binding proteins (PhnC), two transmembrane proteins (PhnE) and a solute-binding protein (PhnD).

It localises to the cell membrane. The enzyme catalyses phosphonate(out) + ATP + H2O = phosphonate(in) + ADP + phosphate + H(+). Functionally, part of the ABC transporter complex PhnCDE involved in phosphonates import. Responsible for energy coupling to the transport system. This chain is Phosphonates import ATP-binding protein PhnC 1, found in Natronomonas pharaonis (strain ATCC 35678 / DSM 2160 / CIP 103997 / JCM 8858 / NBRC 14720 / NCIMB 2260 / Gabara) (Halobacterium pharaonis).